The chain runs to 87 residues: MAMRFLNIGYGNIVSAHRIIAIVSPESAPIKRTVQEAREHNALLDATYGRKTRAVIVMDDGHVVLSPIQPETIAHRLNNKEELSEEG.

It belongs to the RemA family.

The sequence is that of Putative regulatory protein BCQ_3657 from Bacillus cereus (strain Q1).